A 188-amino-acid polypeptide reads, in one-letter code: ATP synthase subunit b 1 (188 aa).

The chain crosses the membrane as a helical span at residues 7 to 27; it reads LSVLALAMLAANPAFAAGGGI.

The protein belongs to the ATPase B chain family. In terms of assembly, F-type ATPases have 2 components, F(1) - the catalytic core - and F(0) - the membrane proton channel. F(1) has five subunits: alpha(3), beta(3), gamma(1), delta(1), epsilon(1). F(0) has three main subunits: a(1), b(2) and c(10-14). The alpha and beta chains form an alternating ring which encloses part of the gamma chain. F(1) is attached to F(0) by a central stalk formed by the gamma and epsilon chains, while a peripheral stalk is formed by the delta and b chains.

Its subcellular location is the cell inner membrane. In terms of biological role, f(1)F(0) ATP synthase produces ATP from ADP in the presence of a proton or sodium gradient. F-type ATPases consist of two structural domains, F(1) containing the extramembraneous catalytic core and F(0) containing the membrane proton channel, linked together by a central stalk and a peripheral stalk. During catalysis, ATP synthesis in the catalytic domain of F(1) is coupled via a rotary mechanism of the central stalk subunits to proton translocation. Component of the F(0) channel, it forms part of the peripheral stalk, linking F(1) to F(0). The sequence is that of ATP synthase subunit b 1 from Roseobacter denitrificans (strain ATCC 33942 / OCh 114) (Erythrobacter sp. (strain OCh 114)).